Here is a 432-residue protein sequence, read N- to C-terminus: Glutamate-1-semialdehyde 2,1-aminomutase (432 aa).

Lys272 carries the post-translational modification N6-(pyridoxal phosphate)lysine.

Belongs to the class-III pyridoxal-phosphate-dependent aminotransferase family. HemL subfamily. As to quaternary structure, homodimer. Pyridoxal 5'-phosphate serves as cofactor.

The protein resides in the cytoplasm. The catalysed reaction is (S)-4-amino-5-oxopentanoate = 5-aminolevulinate. Its pathway is porphyrin-containing compound metabolism; protoporphyrin-IX biosynthesis; 5-aminolevulinate from L-glutamyl-tRNA(Glu): step 2/2. The protein operates within porphyrin-containing compound metabolism; chlorophyll biosynthesis. This chain is Glutamate-1-semialdehyde 2,1-aminomutase, found in Nostoc punctiforme (strain ATCC 29133 / PCC 73102).